The following is a 100-amino-acid chain: Apolipoprotein C-II (100 aa).

Positions 1 to 25 (MDARSLLLLWLLLPLLLLLGCEVQG) are cleaved as a signal peptide. The tract at residues 65-73 (AVDETIRDI) is lipid binding. A lipoprotein lipase cofactor region spans residues 77 to 100 (GSAAISTYTGILTDQILTMLQGKQ).

The protein belongs to the apolipoprotein C2 family. In terms of processing, proapolipoprotein C-II is synthesized as a sialic acid containing glycoprotein which is subsequently desialylated prior to its proteolytic processing. Post-translationally, proapolipoprotein C-II, the major form found in plasma undergoes proteolytic cleavage of its N-terminal hexapeptide to generate apolipoprotein C-II, which occurs as the minor form in plasma. In terms of tissue distribution, liver.

It is found in the secreted. Functionally, component of chylomicrons, very low-density lipoproteins (VLDL), low-density lipoproteins (LDL), and high-density lipoproteins (HDL) in plasma. Plays an important role in lipoprotein metabolism as an activator of lipoprotein lipase. Both proapolipoprotein C-II and apolipoprotein C-II can activate lipoprotein lipase. The polypeptide is Apolipoprotein C-II (APOC2) (Cavia porcellus (Guinea pig)).